A 160-amino-acid chain; its full sequence is 6,7-dimethyl-8-ribityllumazine synthase (160 aa).

Residues F22, 57–59 (AVE), and 81–83 (AVI) each bind 5-amino-6-(D-ribitylamino)uracil. 86-87 (GT) serves as a coordination point for (2S)-2-hydroxy-3-oxobutyl phosphate. Catalysis depends on H89, which acts as the Proton donor. F114 serves as a coordination point for 5-amino-6-(D-ribitylamino)uracil. (2S)-2-hydroxy-3-oxobutyl phosphate is bound at residue R128.

The protein belongs to the DMRL synthase family. As to quaternary structure, forms an icosahedral capsid composed of 60 subunits, arranged as a dodecamer of pentamers.

The enzyme catalyses (2S)-2-hydroxy-3-oxobutyl phosphate + 5-amino-6-(D-ribitylamino)uracil = 6,7-dimethyl-8-(1-D-ribityl)lumazine + phosphate + 2 H2O + H(+). It participates in cofactor biosynthesis; riboflavin biosynthesis; riboflavin from 2-hydroxy-3-oxobutyl phosphate and 5-amino-6-(D-ribitylamino)uracil: step 1/2. Its function is as follows. Catalyzes the formation of 6,7-dimethyl-8-ribityllumazine by condensation of 5-amino-6-(D-ribitylamino)uracil with 3,4-dihydroxy-2-butanone 4-phosphate. This is the penultimate step in the biosynthesis of riboflavin. The polypeptide is 6,7-dimethyl-8-ribityllumazine synthase (Shewanella sediminis (strain HAW-EB3)).